A 312-amino-acid chain; its full sequence is Methionyl-tRNA formyltransferase (312 aa).

A disordered region spans residues 34–54 (PDAASGRRGKPQPSPVAREAA). 110 to 113 (SLLP) lines the (6S)-5,6,7,8-tetrahydrofolate pocket.

It belongs to the Fmt family.

It catalyses the reaction L-methionyl-tRNA(fMet) + (6R)-10-formyltetrahydrofolate = N-formyl-L-methionyl-tRNA(fMet) + (6S)-5,6,7,8-tetrahydrofolate + H(+). Functionally, attaches a formyl group to the free amino group of methionyl-tRNA(fMet). The formyl group appears to play a dual role in the initiator identity of N-formylmethionyl-tRNA by promoting its recognition by IF2 and preventing the misappropriation of this tRNA by the elongation apparatus. This Mycobacterium tuberculosis (strain ATCC 25177 / H37Ra) protein is Methionyl-tRNA formyltransferase.